We begin with the raw amino-acid sequence, 693 residues long: Zinc finger protein 441 (693 aa).

The KRAB domain occupies 4 to 79; sequence VAFEDVAINF…ERACEIKDNS (76 aa). A C2H2-type 1 zinc finger spans residues 169 to 190; that stretch reads YDCKECASFSSLENLQRHMAAH. The C2H2-type 2; degenerate zinc-finger motif lies at 196-218; it reads RICKLCGNAFIWPSLFHMLRRTH. The C2H2-type 3; degenerate zinc finger occupies 224 to 246; it reads YEYEQCSTAFPAYSSTLRHERTH. Residues 252–274 form a C2H2-type 4; degenerate zinc finger; the sequence is YQCKQCGKAFSCSCYTQLYERTH. 15 C2H2-type zinc fingers span residues 280-302, 308-330, 336-358, 364-386, 392-413, 419-441, 447-469, 475-497, 503-525, 531-553, 559-581, 587-609, 615-637, 643-665, and 671-693; these read YECKQCGKAFYHLGSFQRHMIVH, HKCKICGKGFLSPSSVRRHKRTH, YECKYCGKAFSDCTGFRRHMITH, HKCKVCGKAFDSPSLCRRHETTH, YKCECGKAFSDFYYFRNHETTH, YKCKQCGKAFICCTYLQIHERIH, YKCKQCGKAFRSSNYIRVHEKTH, YECKQCGKALSHLKSFQRHMIMH, HKCKICGKSFDSPSSFRRHERIH, YKCKLCGKGFRSSSYIQLHERTH, YGCQQCGKALSDLSSFRRHMITH, HKCKICGKGFDYPSSVQRHERTH, YECKECGKAFSHSSYLRIHERVH, YKCKECGKPFHCPSAFHKHERTH, and YKCKECGEAFHCISSFHKHEMTH.

The protein belongs to the krueppel C2H2-type zinc-finger protein family.

It is found in the nucleus. Functionally, may be involved in transcriptional regulation. This chain is Zinc finger protein 441 (ZNF441), found in Homo sapiens (Human).